The primary structure comprises 206 residues: Ribosomal RNA small subunit methyltransferase G (206 aa).

S-adenosyl-L-methionine is bound by residues Gly-73, Leu-78, 124–125 (VE), and Arg-139.

The protein belongs to the methyltransferase superfamily. RNA methyltransferase RsmG family.

It is found in the cytoplasm. It carries out the reaction guanosine(527) in 16S rRNA + S-adenosyl-L-methionine = N(7)-methylguanosine(527) in 16S rRNA + S-adenosyl-L-homocysteine. Its function is as follows. Specifically methylates the N7 position of guanine in position 527 of 16S rRNA. The chain is Ribosomal RNA small subunit methyltransferase G from Serratia proteamaculans (strain 568).